The primary structure comprises 427 residues: L-rhamnose isomerase (427 aa).

Positions 264, 296, and 298 each coordinate Mn(2+).

This sequence belongs to the rhamnose isomerase family. The cofactor is Mn(2+).

It localises to the cytoplasm. The catalysed reaction is L-rhamnopyranose = L-rhamnulose. It functions in the pathway carbohydrate degradation; L-rhamnose degradation; glycerone phosphate from L-rhamnose: step 1/3. Functionally, catalyzes the interconversion of L-rhamnose and L-rhamnulose. This chain is L-rhamnose isomerase, found in Rhodopirellula baltica (strain DSM 10527 / NCIMB 13988 / SH1).